Consider the following 380-residue polypeptide: Cytochrome b (380 aa).

4 consecutive transmembrane segments (helical) span residues 34 to 54 (FGSL…LLAT), 78 to 99 (WLIR…YLHI), 114 to 134 (WNTG…GYVL), and 179 to 199 (FFAL…IHLT). Positions 84 and 98 each coordinate heme b. Heme b contacts are provided by H183 and H197. H202 is an a ubiquinone binding site. 4 helical membrane-spanning segments follow: residues 227-247 (LKDI…ALFS), 289-309 (LGGV…PFLH), 321-341 (ISQL…WVGS), and 348-368 (FIII…ILFP).

It belongs to the cytochrome b family. In terms of assembly, the cytochrome bc1 complex contains 11 subunits: 3 respiratory subunits (MT-CYB, CYC1 and UQCRFS1), 2 core proteins (UQCRC1 and UQCRC2) and 6 low-molecular weight proteins (UQCRH/QCR6, UQCRB/QCR7, UQCRQ/QCR8, UQCR10/QCR9, UQCR11/QCR10 and a cleavage product of UQCRFS1). This cytochrome bc1 complex then forms a dimer. It depends on heme b as a cofactor.

Its subcellular location is the mitochondrion inner membrane. In terms of biological role, component of the ubiquinol-cytochrome c reductase complex (complex III or cytochrome b-c1 complex) that is part of the mitochondrial respiratory chain. The b-c1 complex mediates electron transfer from ubiquinol to cytochrome c. Contributes to the generation of a proton gradient across the mitochondrial membrane that is then used for ATP synthesis. In Pelecanoides magellani (Magellanic diving petrel), this protein is Cytochrome b (MT-CYB).